We begin with the raw amino-acid sequence, 65 residues long: Large ribosomal subunit protein uL30 (65 aa).

Belongs to the universal ribosomal protein uL30 family. In terms of assembly, part of the 50S ribosomal subunit.

The chain is Large ribosomal subunit protein uL30 from Mesorhizobium japonicum (strain LMG 29417 / CECT 9101 / MAFF 303099) (Mesorhizobium loti (strain MAFF 303099)).